A 309-amino-acid chain; its full sequence is Protein FdhE homolog (309 aa).

Belongs to the FdhE family.

Its subcellular location is the cytoplasm. Its function is as follows. Necessary for formate dehydrogenase activity. The sequence is that of Protein FdhE homolog from Yersinia enterocolitica serotype O:8 / biotype 1B (strain NCTC 13174 / 8081).